We begin with the raw amino-acid sequence, 132 residues long: Precursor of CEP10 (132 aa).

The signal sequence occupies residues 1 to 19 (MKLFIIIVVTSLTISKVFD). The propeptide occupies 20–66 (KTLVTIEARNLRKMDRHEHFNANEDFVEAKMLKKIDNKNNLNNRCIN). Hydroxyproline occurs at positions 70 and 73. The propeptide occupies 82–91 (PKVINNKFTK). Hydroxyproline occurs at positions 95, 98, and 102. Positions 107 to 116 (LRVVNNKFTN) are excised as a propeptide. Hydroxyproline is present on residues proline 120, proline 123, and proline 127. A propeptide is located at residue proline 132.

The protein belongs to the C-terminally encoded plant signaling peptide (CEP) family. Interacts with CEP receptors (e.g. CEPR1 and CEPR2). The mature small signaling peptide is generated by proteolytic processing of the longer precursor.

It localises to the secreted. Its subcellular location is the extracellular space. The protein resides in the apoplast. Extracellular signaling peptide that may regulate primary root growth rate and systemic nitrogen (N)-demand signaling. This chain is Precursor of CEP10, found in Arabidopsis thaliana (Mouse-ear cress).